The following is a 208-amino-acid chain: Large ribosomal subunit protein uL3 (208 aa).

Residues 116-148 are disordered; sequence GFQGVIKRHGQSRGPMAHGSRYHRRPGSMGPVA.

It belongs to the universal ribosomal protein uL3 family. Part of the 50S ribosomal subunit. Forms a cluster with proteins L14 and L19.

One of the primary rRNA binding proteins, it binds directly near the 3'-end of the 23S rRNA, where it nucleates assembly of the 50S subunit. The sequence is that of Large ribosomal subunit protein uL3 from Streptococcus agalactiae serotype Ia (strain ATCC 27591 / A909 / CDC SS700).